A 227-amino-acid chain; its full sequence is MPQLRWLGHAAVELLINKKRVLIDPMIKDNPLSPVKLDSFNNNVDLIVVTHDHYDHLGDAVELLKMNPKASLFATFDLEVYLSNEYKIDMSRFIPANVGGFIDFDGLKLALTKAVHSSEHSDPSGAIISGENITVYHAGDTGLFEDMKLIGEVFKPDYALLPIGGRFTMDPYQASLAVDMIKPKKYAIPIHFNTWDLIKVNPDDFVKEVSKRGYRALVLKPGQSVEL.

It belongs to the UPF0173 family.

The protein is UPF0173 metal-dependent hydrolase Saci_1512 of Sulfolobus acidocaldarius (strain ATCC 33909 / DSM 639 / JCM 8929 / NBRC 15157 / NCIMB 11770).